The chain runs to 154 residues: MKRIEAYTDGACSGNPGPGGWGALLRWNGNEKELKGGEAETTNNRMELMAAISALSALKEPCEVDLYTDSVYVRDGISGWIEGWKRNGWKTAAKKPVKNAELWQALDEARKAHKVTWHWIKGHAGHPENERADELARAGMEPFKYAGHRTLKVK.

The region spanning 1–141 is the RNase H type-1 domain; the sequence is MKRIEAYTDG…ADELARAGME (141 aa). The Mg(2+) site is built by D9, E47, D69, and D133.

This sequence belongs to the RNase H family. Monomer. Mg(2+) serves as cofactor.

The protein localises to the cytoplasm. The catalysed reaction is Endonucleolytic cleavage to 5'-phosphomonoester.. In terms of biological role, endonuclease that specifically degrades the RNA of RNA-DNA hybrids. The protein is Ribonuclease H of Brucella abortus (strain 2308).